The following is a 482-amino-acid chain: MDSFGQPRPEDNQSVVRRMQKKYWKTKQVFIKATGKKEDEHLVASDAELDAKLEVFHSVQETCTELLKIIEKYQLRLNVISEEENELGLFLKFQAERDATQAGKMMDATGKALCSSAKQRLALCTPLSRLKQEVATFSQRAVSDTLMTINRMEQARTEYRGALLWMKDVSQELDPDTLKQMEKFRKVQMQVRNSKASFDKLKMDVCQKVDLLGASRCNMLSHSLTTYQRTLLGFWKKTARMMSQIHEACIGFHPYDFVALKQLQDTPSKISEDNKDEQIGGFLTEQLNKLVLSDEEASFESEQANKDHNEKHSQMREFGAPQFSNSENVAKDLPVDSLEGEDFEKEFSFLNNLLSSGSSSTSEFTQECQTAFGSPSASLTSQEPSMGSEPLAHSSRFLPSQLFDLGFHVAGAFNNWVSQEESELCLSHTDNQPVPSQSPKKLTRSPNNGNQDMSAWFNLFADLDPLSNPDAIGHSDDELLNA.

Residues 44–247 (ASDAELDAKL…TARMMSQIHE (204 aa)) enclose the AH domain. Disordered regions lie at residues 365 to 393 (TQECQTAFGSPSASLTSQEPSMGSEPLAH) and 427 to 449 (SHTDNQPVPSQSPKKLTRSPNNG). 2 stretches are compositionally biased toward polar residues: residues 366 to 385 (QECQTAFGSPSASLTSQEPS) and 428 to 449 (HTDNQPVPSQSPKKLTRSPNNG).

The sequence is that of Islet cell autoantigen 1-like protein (ICA1L) from Homo sapiens (Human).